The sequence spans 556 residues: Arginine--tRNA ligase (556 aa).

Positions 132–142 (ANPTGDLHLGH) match the 'HIGH' region motif.

Belongs to the class-I aminoacyl-tRNA synthetase family. As to quaternary structure, monomer.

Its subcellular location is the cytoplasm. It catalyses the reaction tRNA(Arg) + L-arginine + ATP = L-arginyl-tRNA(Arg) + AMP + diphosphate. The protein is Arginine--tRNA ligase of Bacillus cereus (strain ATCC 14579 / DSM 31 / CCUG 7414 / JCM 2152 / NBRC 15305 / NCIMB 9373 / NCTC 2599 / NRRL B-3711).